A 337-amino-acid chain; its full sequence is uncharacterized protein (337 aa).

The region spanning 12-60 (SLNYVDLPDTVHRKIFEYLNPWEIFKLSRISKAIHVTILKNKKFAVKDI) is the F-box domain.

This is an uncharacterized protein from Caenorhabditis elegans.